Reading from the N-terminus, the 499-residue chain is AP-1-like transcription factor CAP1 (499 aa).

Positions 1–64 (MTDIKRNFSD…RAYRERKERK (64 aa)) are disordered. Short sequence motifs (bipartite nuclear localization signal) lie at residues 20 to 27 (TKKLHVDS) and 44 to 51 (SKRTAQNR). Residues 40 to 103 (TEPKSKRTAQ…DVLKNELAKY (64 aa)) enclose the bZIP domain. The basic motif stretch occupies residues 43-66 (KSKRTAQNRAAQRAYRERKERKMK). The stretch at 49-105 (QNRAAQRAYRERKERKMKELEDKVRLLEDANVRALTETDFLRAQVDVLKNELAKYTG) forms a coiled coil. Positions 68–75 (LEDKVRLL) are leucine-zipper. Residues 104-215 (TGGSDFSDLN…SSTPLNDNLL (112 aa)) form a disordered region. Over residues 123 to 148 (HPNNHHSNVSTGTPHGSMSSSNSVAS) the composition is skewed to polar residues. Low complexity-rich tracts occupy residues 155-164 (SSASSVSNNS) and 186-215 (QQQQQKVPQGVPDLVSGSSSSSTPLNDNLL). Positions 254–261 (CVKLNEAC) are n-CRD. Cystine bridges form between Cys-254/Cys-446 and Cys-261/Cys-477. The disordered stretch occupies residues 408–442 (PEKQEKGKYEPPSTSKTTNNNEEEDKDEVVPAPPQ). The span at 417–427 (EPPSTSKTTNN) shows a compositional bias: low complexity. The segment at 446-477 (CSEIWDRITSHPKYTELDIDGLCNELKSKAKC) is c-CRD. The Nuclear export signal signature appears at 462–469 (LDIDGLCN).

It belongs to the bZIP family. YAP subfamily. Interacts with YBP1. Upon oxidative stress, is oxidated by the peroxidase GPX3 and stabilized by YBP1. Oxidative stress induces conformational changes through oxidation of cysteine residues, masking the nuclear export signal, thus abolishing nuclear export by CRM1/exportin 1. In terms of processing, phosphorylated in response to H(2)O(2).

The protein localises to the nucleus. It is found in the cytoplasm. In terms of biological role, transcription activator involved in multidrug resistance, oxidative stress response, and redox homeostasis. Preferentially binds to promoters with the core binding site 5'-TTA[CG]TAA-3'. Involved in the oxidative stress response in via multiple pathways, including the cellular antioxidant defense system, carbohydrate metabolism and energy metabolism, protein degradation, ATP-dependent RNA helicase, and resistance pathways. The ability of the major systemic fungal pathogen of humans to sense and respond to reactive oxygen species, such as H(2)O(2) generated by the host immune system, is required for survival in the host and therefore virulence. Regulates the transcription of COR33, GLR1, GTO1, GTT1, GTT1, TRR1, TRX1, SOD1, CAT1, and the transcription regulator TSA1. Participates in the apoptosis by regulating the expression of the glutathione reductase gene and glutathione content. Also plays a role in the peroxide-mediated induction of MDR1 and other drug response genes such as PDR16, MDR1, FLU1, YCF1, and FCR1. Regulates trehalose accumulation which is important for the oxidative stress tolerance. Recruits ADA2 to its target promoters. Activity of CAP1 is controlled through oxidation of specific cysteine residues resulting in the alteration of its subcellular location. Oxidative stress induces nuclear accumulation and as a result CAP1 transcriptional activity. Nuclear export is restored when disulfide bonds are reduced by thioredoxin, whose expression is controlled by CAP1, providing a mechanism for negative autoregulation. This chain is AP-1-like transcription factor CAP1, found in Candida albicans (strain SC5314 / ATCC MYA-2876) (Yeast).